A 465-amino-acid polypeptide reads, in one-letter code: Cysteine--tRNA ligase (465 aa).

Residue Cys29 participates in Zn(2+) binding. Positions 31 to 41 (PTVYNYIHIGN) match the 'HIGH' region motif. 3 residues coordinate Zn(2+): Cys209, His234, and Glu238. The short motif at 266–270 (KMSKS) is the 'KMSKS' region element. Lys269 lines the ATP pocket. Ser270 is modified (phosphoserine).

The protein belongs to the class-I aminoacyl-tRNA synthetase family. In terms of assembly, monomer. It depends on Zn(2+) as a cofactor.

Its subcellular location is the cytoplasm. The enzyme catalyses tRNA(Cys) + L-cysteine + ATP = L-cysteinyl-tRNA(Cys) + AMP + diphosphate. This Bacillus anthracis (strain A0248) protein is Cysteine--tRNA ligase.